A 453-amino-acid polypeptide reads, in one-letter code: Succinate-semialdehyde dehydrogenase (acetylating) (453 aa).

188–193 is a binding site for NADP(+); it reads ATGGAG. Cysteine 242 is an active-site residue.

In terms of assembly, homodimer.

It catalyses the reaction succinate semialdehyde + NADP(+) + CoA = succinyl-CoA + NADPH + H(+). Its function is as follows. Catalyzes the reduction of succinate semialdehyde to succinyl-CoA. The enzyme is specific for succinate semialdehyde and succinyl-CoA, and only shows low activity with palmitoyl-CoA. There is no activity with NAD(+) as cosubstrate. The protein is Succinate-semialdehyde dehydrogenase (acetylating) (sucD) of Clostridium kluyveri (strain ATCC 8527 / DSM 555 / NBRC 12016 / NCIMB 10680 / K1).